A 262-amino-acid chain; its full sequence is MVQQGFSIDLILARNREEAPDGKDSVSSRPHIPCAPQPLAPTKYAKEIPRRKDGQEQGEITSFQCSSEEARNRQFSNPSLPALHRSSGSSDEFSPAGSEDDGTESSGRNSQENDTEHRSKSPKSDLQRRLRTAFTPQQITRLEQAFNKQRYLGASERKKLATSLQLSEIQVKTWFQNRRMKLKRQIQDQQHSMVPPPVCYPQTFSYYPGGFPVPLNSGSFYQPPAHPFQAPQHSFIPQPLHHHMRMSAHQEQFPPLFGAQYM.

2 stretches are compositionally biased toward basic and acidic residues: residues 16 to 26 (REEAPDGKDSV) and 44 to 55 (YAKEIPRRKDGQ). The tract at residues 16–129 (REEAPDGKDS…KSPKSDLQRR (114 aa)) is disordered. Positions 58–79 (GEITSFQCSSEEARNRQFSNPS) are enriched in polar residues. Over residues 114–128 (DTEHRSKSPKSDLQR) the composition is skewed to basic and acidic residues. The homeobox DNA-binding region spans 127-186 (QRRLRTAFTPQQITRLEQAFNKQRYLGASERKKLATSLQLSEIQVKTWFQNRRMKLKRQI).

It is found in the nucleus. Functionally, transcriptional repressor. Cooperates with vent2 in a ventral signaling pathway downstream of bmp4, which antagonizes the Spemann organizer and dorsal mesoderm formation, and leads to ventral mesoderm formation. Acts downstream of bmp4 to repress transcription of foxa4-B/XFD-1'. Binds to DNA with preference for the target sequence 5'-CTATT[T/C]G-3'. Also binds 5'-TGCATTTTG-3' at a lower frequency, and occasionally 5'-TTGATC-3'. Binds to the homeobox 2 (HBX2) repressor element in the promoter of the myf5 gene. Cooperates with vent2 to repress myf5 expression in the ventral domain. This Xenopus tropicalis (Western clawed frog) protein is Homeobox protein vent1.